The sequence spans 308 residues: UDP-N-acetylenolpyruvoylglucosamine reductase (308 aa).

Positions 22-185 (RVGGPADWLF…TEATFRAEAG (164 aa)) constitute an FAD-binding PCMH-type domain. Residue R165 is part of the active site. Residues 197–211 (QIARRDSSQPTKERS) show a composition bias toward basic and acidic residues. The tract at residues 197 to 228 (QIARRDSSQPTKERSAGSTFRNPAGFSSTGRA) is disordered. Over residues 212-226 (AGSTFRNPAGFSSTG) the composition is skewed to polar residues. S214 (proton donor) is an active-site residue. The active site involves E296.

This sequence belongs to the MurB family. The cofactor is FAD.

It localises to the cytoplasm. It catalyses the reaction UDP-N-acetyl-alpha-D-muramate + NADP(+) = UDP-N-acetyl-3-O-(1-carboxyvinyl)-alpha-D-glucosamine + NADPH + H(+). The protein operates within cell wall biogenesis; peptidoglycan biosynthesis. Functionally, cell wall formation. The sequence is that of UDP-N-acetylenolpyruvoylglucosamine reductase from Cereibacter sphaeroides (strain ATCC 17023 / DSM 158 / JCM 6121 / CCUG 31486 / LMG 2827 / NBRC 12203 / NCIMB 8253 / ATH 2.4.1.) (Rhodobacter sphaeroides).